A 243-amino-acid chain; its full sequence is Linker for activation of T-cells family member 2 (243 aa).

Residues Met-1–Thr-5 lie on the Extracellular side of the membrane. Residues Glu-6–Val-26 form a helical; Signal-anchor for type III membrane protein membrane-spanning segment. S-palmitoyl cysteine attachment occurs at residues Cys-25 and Cys-28. Residues Arg-27 to Ala-243 are Cytoplasmic-facing. Ser-44 bears the Phosphoserine mark. Tyr-58 is subject to Phosphotyrosine. 2 positions are modified to phosphoserine: Ser-59 and Ser-92. 3 positions are modified to phosphotyrosine: Tyr-136, Tyr-193, and Tyr-233. The segment at Pro-174 to Ala-243 is disordered.

In terms of assembly, when phosphorylated, interacts with GRB2. May also interact with SOS1, GAB1 and CBL. In terms of processing, phosphorylated on tyrosines following cross-linking of BCR in B-cells, FCGR1 in myeloid cells, or FCER1 in mast cells; which induces the recruitment of GRB2. May be polyubiquitinated. Highly expressed in spleen, peripheral blood lymphocytes, and germinal centers of lymph nodes. Also expressed in placenta, lung, pancreas and small intestine. Present in B-cells, NK cells and monocytes. Absent from T-cells (at protein level).

The protein localises to the cell membrane. Functionally, involved in FCER1 (high affinity immunoglobulin epsilon receptor)-mediated signaling in mast cells. May also be involved in BCR (B-cell antigen receptor)-mediated signaling in B-cells and FCGR1 (high affinity immunoglobulin gamma Fc receptor I)-mediated signaling in myeloid cells. Couples activation of these receptors and their associated kinases with distal intracellular events through the recruitment of GRB2. This chain is Linker for activation of T-cells family member 2 (LAT2), found in Homo sapiens (Human).